A 395-amino-acid chain; its full sequence is Elongation factor Tu (395 aa).

The 196-residue stretch at 10 to 205 (KPHVNIGTIG…AVDSYIPMPE (196 aa)) folds into the tr-type G domain. Positions 19-26 (GHIDHGKT) are G1. 19 to 26 (GHIDHGKT) is a GTP binding site. T26 lines the Mg(2+) pocket. Positions 61-65 (GITIA) are G2. The G3 stretch occupies residues 82 to 85 (DCPG). GTP is bound by residues 82-86 (DCPGH) and 137-140 (NKVD). Residues 137–140 (NKVD) are G4. The segment at 175-177 (SAL) is G5.

Belongs to the TRAFAC class translation factor GTPase superfamily. Classic translation factor GTPase family. EF-Tu/EF-1A subfamily. Monomer.

It is found in the cytoplasm. It catalyses the reaction GTP + H2O = GDP + phosphate + H(+). In terms of biological role, GTP hydrolase that promotes the GTP-dependent binding of aminoacyl-tRNA to the A-site of ribosomes during protein biosynthesis. The protein is Elongation factor Tu of Solibacter usitatus (strain Ellin6076).